Reading from the N-terminus, the 336-residue chain is Acyl-CoA-binding domain-containing protein 4 (336 aa).

A helical; Signal-anchor membrane pass occupies residues 12-32 (AVIGLLFAFLVAKLISTVIAF). The interval 40 to 88 (TRSTPTSPSAADTPAAPAPPPASLDGGHGDTSDGSGSDSDSDWEGVEST) is disordered. Positions 42–54 (STPTSPSAADTPA) are enriched in low complexity. Residues 78 to 88 (SDSDWEGVEST) show a composition bias toward acidic residues. The 89-residue stretch at 90-178 (LDEEFSAASA…VDELFPNWSM (89 aa)) folds into the ACB domain. Residues 120-124 (YGLYK), Lys-142, Lys-146, and Tyr-165 each bind an acyl-CoA. Asn-175 carries an N-linked (GlcNAc...) asparagine glycan. The segment at 179–202 (GSSTKRKDEDTTVSASSSKGPMGP) is disordered. Asn-216 is a glycosylation site (N-linked (GlcNAc...) asparagine). 2 ANK repeats span residues 251 to 280 (EGRT…DVNA) and 284 to 313 (EGQT…DVQI).

It belongs to the ACBP family. As to expression, highly expressed in leaves. Expressed at low levels in roots and seeds.

The protein localises to the endoplasmic reticulum membrane. Binds medium- and long-chain acyl-CoA esters with high affinity. Can interact in vitro with palmitoyl-CoA, linoleoyl-CoA and linolenoyl-CoA. Binds phosphatidic acid (PA) and phosphatidylcholine (PC) in vitro. May play a role in the biosynthesis of phospholipids. This chain is Acyl-CoA-binding domain-containing protein 4, found in Oryza sativa subsp. japonica (Rice).